Here is a 146-residue protein sequence, read N- to C-terminus: Hemoglobin subunit beta (146 aa).

In terms of domain architecture, Globin spans 2 to 146 (HWSAEEKQLI…VAHALARKYH (145 aa)). Histidine 63 and histidine 92 together coordinate heme b.

Belongs to the globin family. As to quaternary structure, heterotetramer of two alpha chains and two beta chains. Red blood cells.

Involved in oxygen transport from the lung to the various peripheral tissues. In Columba livia (Rock dove), this protein is Hemoglobin subunit beta (HBB).